Consider the following 147-residue polypeptide: 3-dehydroquinate dehydratase (147 aa).

Residue Y22 is the Proton acceptor of the active site. N73, H79, and D86 together coordinate substrate. Catalysis depends on H99, which acts as the Proton donor. Residues 100–101 (LS) and R110 each bind substrate.

It belongs to the type-II 3-dehydroquinase family. Homododecamer.

The enzyme catalyses 3-dehydroquinate = 3-dehydroshikimate + H2O. It functions in the pathway metabolic intermediate biosynthesis; chorismate biosynthesis; chorismate from D-erythrose 4-phosphate and phosphoenolpyruvate: step 3/7. In terms of biological role, catalyzes a trans-dehydration via an enolate intermediate. The protein is 3-dehydroquinate dehydratase of Synechococcus sp. (strain WH7803).